The chain runs to 886 residues: Cytosolic carboxypeptidase-like protein 5 (886 aa).

A Peptidase M14 domain is found at 157-570 (YPFSYSDCQE…AMAIAALDMA (414 aa)). Zn(2+) contacts are provided by His-252 and Glu-255. Over residues 344-354 (SQSSSEHQPSS) the composition is skewed to low complexity. The tract at residues 344–364 (SQSSSEHQPSSCLPPDAPVSD) is disordered. Residue His-434 coordinates Zn(2+). Catalysis depends on Glu-516, which acts as the Proton donor/acceptor. Disordered regions lie at residues 605-734 (STLN…SSHK) and 784-848 (LQAR…FSPI). The segment covering 631 to 640 (CSENTLSRAR) has biased composition (polar residues). Positions 641–666 (SFSTGTSAGGSSSSQQNSPQMKNSPS) are enriched in low complexity. The segment covering 696–705 (REPRSQDRRR) has biased composition (basic and acidic residues). A compositionally biased stretch (low complexity) spans 714–732 (PAGSLAPSPAPTSSGPASS). Residue Ser-841 is modified to Phosphoserine.

The protein belongs to the peptidase M14 family. Zn(2+) is required as a cofactor. In terms of tissue distribution, expressed in brain.

It localises to the cytoplasm. The protein localises to the cytosol. The protein resides in the nucleus. It is found in the cytoskeleton. Its subcellular location is the spindle. It localises to the midbody. It carries out the reaction gamma-L-glutamyl-L-glutamyl-[protein] + H2O = L-glutamyl-[protein] + L-glutamate. The catalysed reaction is (L-glutamyl)(n+1)-gamma-L-glutamyl-L-glutamyl-[protein] + H2O = (L-glutamyl)(n)-gamma-L-glutamyl-L-glutamyl-[protein] + L-glutamate. The enzyme catalyses C-terminal L-alpha-aminoacyl-L-glutamyl-[tubulin] + H2O = C-terminal L-alpha-aminoacyl-[tubulin] + L-glutamate. It catalyses the reaction C-terminal L-alpha-aminoacyl-L-glutamyl-L-glutamyl-[tubulin] + H2O = C-terminal L-alpha-aminoacyl-L-glutamyl-[tubulin] + L-glutamate. Metallocarboxypeptidase that mediates deglutamylation of tubulin and non-tubulin target proteins. Catalyzes the removal of polyglutamate side chains present on the gamma-carboxyl group of glutamate residues within the C-terminal tail of alpha- and beta-tubulin. Cleaves alpha- and gamma-linked polyglutamate tubulin side-chain, as well as the branching point glutamate. Also catalyzes the removal of alpha-linked glutamate residues from the carboxy-terminus of alpha-tubulin. Mediates deglutamylation of nucleotidyltransferase CGAS, leading to CGAS antiviral defense response activation. In Homo sapiens (Human), this protein is Cytosolic carboxypeptidase-like protein 5.